Consider the following 239-residue polypeptide: DUP240 protein DFP3 (239 aa).

The Cytoplasmic portion of the chain corresponds to 1 to 54; sequence MQPHLDNNSNNDDVKLDTLGEQNVLSSAENITLPEDTFKSYMTYLLYEMAHYKP. A helical transmembrane segment spans residues 55-75; that stretch reads MIFSFLALSVSILIVVIFHNV. The Extracellular segment spans residues 76–79; sequence KACD. Residues 80–104 form a helical membrane-spanning segment; it reads VVFGFSIFVTSILFLSTLIPFNVYI. Residues 105–239 are Cytoplasmic-facing; sequence SDEGFRIKLL…RKQYPDADIP (135 aa).

This sequence belongs to the DUP/COS family. In terms of assembly, interacts according to large scale protein interaction studies with MEC3 and ULP1.

It localises to the membrane. In Saccharomyces cerevisiae (strain ATCC 204508 / S288c) (Baker's yeast), this protein is DUP240 protein DFP3.